The sequence spans 327 residues: Phenylalanine--tRNA ligase alpha subunit (327 aa).

A Mg(2+)-binding site is contributed by glutamate 253.

This sequence belongs to the class-II aminoacyl-tRNA synthetase family. Phe-tRNA synthetase alpha subunit type 1 subfamily. In terms of assembly, tetramer of two alpha and two beta subunits. The cofactor is Mg(2+).

It localises to the cytoplasm. It catalyses the reaction tRNA(Phe) + L-phenylalanine + ATP = L-phenylalanyl-tRNA(Phe) + AMP + diphosphate + H(+). In Laribacter hongkongensis (strain HLHK9), this protein is Phenylalanine--tRNA ligase alpha subunit.